Here is a 219-residue protein sequence, read N- to C-terminus: Thiamine-phosphate synthase (219 aa).

4-amino-2-methyl-5-(diphosphooxymethyl)pyrimidine is bound by residues 44–48 (QFREK) and N79. The Mg(2+) site is built by D80 and D99. S117 contributes to the 4-amino-2-methyl-5-(diphosphooxymethyl)pyrimidine binding site. 143-145 (TST) provides a ligand contact to 2-[(2R,5Z)-2-carboxy-4-methylthiazol-5(2H)-ylidene]ethyl phosphate. K146 lines the 4-amino-2-methyl-5-(diphosphooxymethyl)pyrimidine pocket. 2-[(2R,5Z)-2-carboxy-4-methylthiazol-5(2H)-ylidene]ethyl phosphate is bound by residues G175 and 195–196 (IS).

Belongs to the thiamine-phosphate synthase family. Mg(2+) is required as a cofactor.

The catalysed reaction is 2-[(2R,5Z)-2-carboxy-4-methylthiazol-5(2H)-ylidene]ethyl phosphate + 4-amino-2-methyl-5-(diphosphooxymethyl)pyrimidine + 2 H(+) = thiamine phosphate + CO2 + diphosphate. It catalyses the reaction 2-(2-carboxy-4-methylthiazol-5-yl)ethyl phosphate + 4-amino-2-methyl-5-(diphosphooxymethyl)pyrimidine + 2 H(+) = thiamine phosphate + CO2 + diphosphate. It carries out the reaction 4-methyl-5-(2-phosphooxyethyl)-thiazole + 4-amino-2-methyl-5-(diphosphooxymethyl)pyrimidine + H(+) = thiamine phosphate + diphosphate. The protein operates within cofactor biosynthesis; thiamine diphosphate biosynthesis; thiamine phosphate from 4-amino-2-methyl-5-diphosphomethylpyrimidine and 4-methyl-5-(2-phosphoethyl)-thiazole: step 1/1. In terms of biological role, condenses 4-methyl-5-(beta-hydroxyethyl)thiazole monophosphate (THZ-P) and 2-methyl-4-amino-5-hydroxymethyl pyrimidine pyrophosphate (HMP-PP) to form thiamine monophosphate (TMP). The protein is Thiamine-phosphate synthase of Bacillus thuringiensis subsp. konkukian (strain 97-27).